Reading from the N-terminus, the 130-residue chain is Large ribosomal subunit protein uL14 (130 aa).

Belongs to the universal ribosomal protein uL14 family. In terms of assembly, part of the 50S ribosomal subunit. Forms a cluster with proteins L3 and L19. In the 70S ribosome, L14 and L19 interact and together make contacts with the 16S rRNA in bridges B5 and B8.

Binds to 23S rRNA. Forms part of two intersubunit bridges in the 70S ribosome. This Leptospira biflexa serovar Patoc (strain Patoc 1 / Ames) protein is Large ribosomal subunit protein uL14.